The sequence spans 108 residues: DNA-binding protein HBbu (108 aa).

The protein belongs to the bacterial histone-like protein family.

In terms of biological role, histone-like DNA-binding protein which is capable of wrapping DNA to stabilize it, and thus to prevent its denaturation under extreme environmental conditions. This chain is DNA-binding protein HBbu (hbb), found in Borreliella japonica (Borrelia japonica).